A 476-amino-acid chain; its full sequence is Aspartyl/glutamyl-tRNA(Asn/Gln) amidotransferase subunit B (476 aa).

Belongs to the GatB/GatE family. GatB subfamily. In terms of assembly, heterotrimer of A, B and C subunits.

The enzyme catalyses L-glutamyl-tRNA(Gln) + L-glutamine + ATP + H2O = L-glutaminyl-tRNA(Gln) + L-glutamate + ADP + phosphate + H(+). It catalyses the reaction L-aspartyl-tRNA(Asn) + L-glutamine + ATP + H2O = L-asparaginyl-tRNA(Asn) + L-glutamate + ADP + phosphate + 2 H(+). Functionally, allows the formation of correctly charged Asn-tRNA(Asn) or Gln-tRNA(Gln) through the transamidation of misacylated Asp-tRNA(Asn) or Glu-tRNA(Gln) in organisms which lack either or both of asparaginyl-tRNA or glutaminyl-tRNA synthetases. The reaction takes place in the presence of glutamine and ATP through an activated phospho-Asp-tRNA(Asn) or phospho-Glu-tRNA(Gln). The protein is Aspartyl/glutamyl-tRNA(Asn/Gln) amidotransferase subunit B of Lacticaseibacillus casei (strain BL23) (Lactobacillus casei).